The following is a 66-amino-acid chain: QPNLWRCEKDEEFVNCAPRCPQNCRNIRSYQPCLVLTPVCAPGCVCRSGKVKNDRGDCVSITDCFK.

5 cysteine pairs are disulfide-bonded: C7–C44, C16–C40, C20–C33, C24–C64, and C46–C58. The region spanning 7-64 (CEKDEEFVNCAPRCPQNCRNIRSYQPCLVLTPVCAPGCVCRSGKVKNDRGDCVSITDC) is the TIL domain.

This sequence belongs to the serine protease inhibitor-like (TIL domain-containing) family. In terms of tissue distribution, expressed by the venom gland.

Its subcellular location is the secreted. In terms of biological role, serine protease inhibitor. The polypeptide is Venom peptide CtAPI (Chaerilus tricostatus (Scorpion)).